A 260-amino-acid polypeptide reads, in one-letter code: NAD-capped RNA hydrolase NudC (260 aa).

Position 69 (arginine 69) interacts with substrate. 2 residues coordinate Zn(2+): cysteine 98 and cysteine 101. Position 111 (glutamate 111) interacts with substrate. Residues cysteine 116 and cysteine 119 each coordinate Zn(2+). Tyrosine 124 lines the substrate pocket. The Nudix hydrolase domain maps to 125-248 (PQIAPCIIVA…TVARRLIEDT (124 aa)). A divalent metal cation contacts are provided by alanine 158, glutamate 174, and glutamate 178. The Nudix box motif lies at 159 to 180 (GFVEVGETLEQTVVREVMEESQ). 192-199 (QPWPFPHS) is a binding site for substrate. Glutamate 219 is a binding site for a divalent metal cation. Position 241 (alanine 241) interacts with substrate.

Belongs to the Nudix hydrolase family. NudC subfamily. Homodimer. Mg(2+) serves as cofactor. It depends on Mn(2+) as a cofactor. The cofactor is Zn(2+).

The catalysed reaction is a 5'-end NAD(+)-phospho-ribonucleoside in mRNA + H2O = a 5'-end phospho-adenosine-phospho-ribonucleoside in mRNA + beta-nicotinamide D-ribonucleotide + 2 H(+). The enzyme catalyses NAD(+) + H2O = beta-nicotinamide D-ribonucleotide + AMP + 2 H(+). It carries out the reaction NADH + H2O = reduced beta-nicotinamide D-ribonucleotide + AMP + 2 H(+). In terms of biological role, mRNA decapping enzyme that specifically removes the nicotinamide adenine dinucleotide (NAD) cap from a subset of mRNAs by hydrolyzing the diphosphate linkage to produce nicotinamide mononucleotide (NMN) and 5' monophosphate mRNA. The NAD-cap is present at the 5'-end of some mRNAs and stabilizes RNA against 5'-processing. Has preference for mRNAs with a 5'-end purine. Catalyzes the hydrolysis of a broad range of dinucleotide pyrophosphates. This is NAD-capped RNA hydrolase NudC from Pectobacterium carotovorum subsp. carotovorum (strain PC1).